Reading from the N-terminus, the 274-residue chain is Acyl-[acyl-carrier-protein]--UDP-N-acetylglucosamine O-acyltransferase (274 aa).

It belongs to the transferase hexapeptide repeat family. LpxA subfamily. As to quaternary structure, homotrimer.

It localises to the cytoplasm. The enzyme catalyses a (3R)-hydroxyacyl-[ACP] + UDP-N-acetyl-alpha-D-glucosamine = a UDP-3-O-[(3R)-3-hydroxyacyl]-N-acetyl-alpha-D-glucosamine + holo-[ACP]. Its pathway is glycolipid biosynthesis; lipid IV(A) biosynthesis; lipid IV(A) from (3R)-3-hydroxytetradecanoyl-[acyl-carrier-protein] and UDP-N-acetyl-alpha-D-glucosamine: step 1/6. Its function is as follows. Involved in the biosynthesis of lipid A, a phosphorylated glycolipid that anchors the lipopolysaccharide to the outer membrane of the cell. This chain is Acyl-[acyl-carrier-protein]--UDP-N-acetylglucosamine O-acyltransferase, found in Bartonella quintana (strain Toulouse) (Rochalimaea quintana).